The sequence spans 266 residues: Norfluorocurarine synthase 2 (266 aa).

The region spanning 11–121 (HFVLVHGAGH…VMPDSTHPPN (111 aa)) is the AB hydrolase-1 domain. Catalysis depends on residues Ser-86, Asp-216, and His-244.

This sequence belongs to the AB hydrolase superfamily. Homodimer.

It catalyses the reaction 17-dehydropreakuammicine + H2O = norfluorocurarine + methanol + CO2. The protein operates within alkaloid biosynthesis. In terms of biological role, hydrolase involved in the biosynthesis of curare monoterpene indole alkaloids (MIAs), natural products such as diaboline, a pharmacologically active compound used to regulate blood pressure. Curare alkaloids act as animal glycine receptor antagonists. Catalyzes the conversion of dehydropreakuammicine to norfluorocurarine. This Strychnos sp protein is Norfluorocurarine synthase 2.